Reading from the N-terminus, the 296-residue chain is Glycine--tRNA ligase alpha subunit (296 aa).

Belongs to the class-II aminoacyl-tRNA synthetase family. Tetramer of two alpha and two beta subunits.

Its subcellular location is the cytoplasm. It carries out the reaction tRNA(Gly) + glycine + ATP = glycyl-tRNA(Gly) + AMP + diphosphate. The chain is Glycine--tRNA ligase alpha subunit from Exiguobacterium sibiricum (strain DSM 17290 / CCUG 55495 / CIP 109462 / JCM 13490 / 255-15).